The chain runs to 225 residues: Small ribosomal subunit protein eS1 (225 aa).

It belongs to the eukaryotic ribosomal protein eS1 family.

This is Small ribosomal subunit protein eS1 from Methanococcus maripaludis (strain DSM 14266 / JCM 13030 / NBRC 101832 / S2 / LL).